We begin with the raw amino-acid sequence, 164 residues long: Transcription factor E (164 aa).

The HTH TFE/IIEalpha-type domain occupies 5-87 (NDKVIRGYLL…LWRLDFSDIE (83 aa)).

This sequence belongs to the TFE family. In terms of assembly, monomer. Interaction with RNA polymerase subunits RpoF and RpoE is necessary for Tfe stimulatory transcription activity. Able to interact with Tbp and RNA polymerase in the absence of DNA promoter. Interacts both with the preinitiation and elongation complexes.

In terms of biological role, transcription factor that plays a role in the activation of archaeal genes transcribed by RNA polymerase. Facilitates transcription initiation by enhancing TATA-box recognition by TATA-box-binding protein (Tbp), and transcription factor B (Tfb) and RNA polymerase recruitment. Not absolutely required for transcription in vitro, but particularly important in cases where Tbp or Tfb function is not optimal. It dynamically alters the nucleic acid-binding properties of RNA polymerases by stabilizing the initiation complex and destabilizing elongation complexes. Seems to translocate with the RNA polymerase following initiation and acts by binding to the non template strand of the transcription bubble in elongation complexes. The sequence is that of Transcription factor E from Methanosarcina barkeri (strain Fusaro / DSM 804).